A 236-amino-acid chain; its full sequence is MATPHINAKDGAFAETVLMPGDPLRAKYIAETYLENAELVTDVRNMFGYTGFYKGQRVSVMGHGMGIPSCSIYTKELITEYGVKNIIRIGSCGAVRPDVKVRDVIIGMGACTDSKVNRMRFKDHDFAAIADFGLLRKAVTAAETLGIPVKVGNLFSADLFYSPDPQMFDVMEKFGILGVEMEAAGIYGVAAEYGANALAICTVSDHIKTGEQTSADERQNTFDDMMKIALDSVLLK.

Position 5 (His-5) interacts with a purine D-ribonucleoside. Phosphate is bound by residues Gly-21, Arg-25, Arg-44, and 88–91 (RIGS). A purine D-ribonucleoside is bound by residues 180–182 (EME) and 204–205 (SD). Asp-205 (proton donor) is an active-site residue.

Belongs to the PNP/UDP phosphorylase family. Homohexamer; trimer of homodimers.

The enzyme catalyses a purine D-ribonucleoside + phosphate = a purine nucleobase + alpha-D-ribose 1-phosphate. It carries out the reaction a purine 2'-deoxy-D-ribonucleoside + phosphate = a purine nucleobase + 2-deoxy-alpha-D-ribose 1-phosphate. Catalyzes the reversible phosphorolytic breakdown of the N-glycosidic bond in the beta-(deoxy)ribonucleoside molecules, with the formation of the corresponding free purine bases and pentose-1-phosphate. In Tolumonas auensis (strain DSM 9187 / NBRC 110442 / TA 4), this protein is Purine nucleoside phosphorylase DeoD-type.